A 211-amino-acid chain; its full sequence is Protein-L-isoaspartate O-methyltransferase (211 aa).

Ser62 is a catalytic residue.

The protein belongs to the methyltransferase superfamily. L-isoaspartyl/D-aspartyl protein methyltransferase family.

The protein localises to the cytoplasm. It carries out the reaction [protein]-L-isoaspartate + S-adenosyl-L-methionine = [protein]-L-isoaspartate alpha-methyl ester + S-adenosyl-L-homocysteine. In terms of biological role, catalyzes the methyl esterification of L-isoaspartyl residues in peptides and proteins that result from spontaneous decomposition of normal L-aspartyl and L-asparaginyl residues. It plays a role in the repair and/or degradation of damaged proteins. This chain is Protein-L-isoaspartate O-methyltransferase, found in Shewanella putrefaciens (strain CN-32 / ATCC BAA-453).